The chain runs to 335 residues: Probable phosphoglycerate mutase ARB_03491 (335 aa).

An N-terminal signal peptide occupies residues 1–24 (MAGRILLGLTLLATSLPLLAMGDA). H108 (tele-phosphohistidine intermediate) is an active-site residue. The active-site Proton donor/acceptor is the E211.

Belongs to the phosphoglycerate mutase family.

Its subcellular location is the secreted. In terms of biological role, probable phosphomutase that may have a function related to the manipulation of phosphate groups on carbohydrates. This chain is Probable phosphoglycerate mutase ARB_03491, found in Arthroderma benhamiae (strain ATCC MYA-4681 / CBS 112371) (Trichophyton mentagrophytes).